Consider the following 482-residue polypeptide: Protein trichome birefringence-like 15 (482 aa).

Residues 109–129 (GSVSLSLIILILLVTTLLVSA) traverse the membrane as a helical; Signal-anchor for type II membrane protein segment. A GDS motif motif is present at residues 217 to 219 (GDS). The DCXHWCLPGXXDXWN motif motif lies at 461–475 (DCLHWCLPGIPDTWN).

Belongs to the PC-esterase family. TBL subfamily.

The protein localises to the membrane. Functionally, may act as a bridging protein that binds pectin and other cell wall polysaccharides. Probably involved in maintaining esterification of pectins. May be involved in the specific O-acetylation of cell wall polymers. The chain is Protein trichome birefringence-like 15 (TBL15) from Arabidopsis thaliana (Mouse-ear cress).